The chain runs to 212 residues: MSDSAMEPQNPLTSGDFTAADEPFRLFSEWLKDAERSEPNDPNAMTLATVDPDGLPDARMVLLKGLDDRGFVFYTNTESAKGRELTAHPKAALVFHWKSLRRQVRVRGPVERVTDAEADAYFATRPRLSQIGAWASQQSRPLEGRFALEAAVATTTARYAVGSVPRPPHWTGFRILPVQIEFWHDRPFRLHDRVVFKRENPEIDWEKSRLYP.

Residues 1–20 (MSDSAMEPQNPLTSGDFTAA) are disordered. FMN is bound by residues 59-64 (RMVLLK), 74-75 (YT), K81, and Q103. K64 is a substrate binding site. Substrate contacts are provided by Y121, R125, and S129. Residues 138 to 139 (QS) and W183 each bind FMN. 189–191 (RLH) contacts substrate. R193 contributes to the FMN binding site.

It belongs to the pyridoxamine 5'-phosphate oxidase family. Homodimer. FMN is required as a cofactor.

The catalysed reaction is pyridoxamine 5'-phosphate + O2 + H2O = pyridoxal 5'-phosphate + H2O2 + NH4(+). The enzyme catalyses pyridoxine 5'-phosphate + O2 = pyridoxal 5'-phosphate + H2O2. Its pathway is cofactor metabolism; pyridoxal 5'-phosphate salvage; pyridoxal 5'-phosphate from pyridoxamine 5'-phosphate: step 1/1. The protein operates within cofactor metabolism; pyridoxal 5'-phosphate salvage; pyridoxal 5'-phosphate from pyridoxine 5'-phosphate: step 1/1. In terms of biological role, catalyzes the oxidation of either pyridoxine 5'-phosphate (PNP) or pyridoxamine 5'-phosphate (PMP) into pyridoxal 5'-phosphate (PLP). This chain is Pyridoxine/pyridoxamine 5'-phosphate oxidase, found in Azorhizobium caulinodans (strain ATCC 43989 / DSM 5975 / JCM 20966 / LMG 6465 / NBRC 14845 / NCIMB 13405 / ORS 571).